The sequence spans 626 residues: DEAD-box ATP-dependent RNA helicase 16 (626 aa).

The interval 1-48 (MGKTKLKPVEDVNSEVVDEVEKAEEVEEQRNDREQEEEQKEEEAPKSF) is disordered. A coiled-coil region spans residues 9–47 (VEDVNSEVVDEVEKAEEVEEQRNDREQEEEQKEEEAPKS). The span at 12-27 (VNSEVVDEVEKAEEVE) shows a compositional bias: acidic residues. Positions 46–74 (KSFEELGLDSRLIRALTKKGIEKPTLIQQ) match the Q motif motif. A Helicase ATP-binding domain is found at 77–259 (IPYILEGKDV…KLILHNPIVL (183 aa)). An ATP-binding site is contributed by 90–97 (AKTGSGKT). A DEAD box motif is present at residues 207 to 210 (DEAD). One can recognise a Helicase C-terminal domain in the interval 293–477 (ALLKLEVVQK…PFPLLTENAV (185 aa)). Residues 356–385 (IATDDNSQTKKQKEEAKGEANKENKKNNKR) adopt a coiled-coil conformation. Positions 363–381 (QTKKQKEEAKGEANKENKK) are enriched in basic and acidic residues. 2 disordered regions span residues 363-388 (QTKK…RSKP) and 568-626 (AMGN…QKTV).

The protein belongs to the DEAD box helicase family. DDX56/DBP9 subfamily.

The enzyme catalyses ATP + H2O = ADP + phosphate + H(+). This is DEAD-box ATP-dependent RNA helicase 16 (RH16) from Arabidopsis thaliana (Mouse-ear cress).